An 859-amino-acid chain; its full sequence is Volume-regulated anion channel subunit LRRC8D (859 aa).

Residues 1 to 22 (MFTLAEVASLNDIQPTYRILKP) are Cytoplasmic-facing. A helical transmembrane segment spans residues 23–48 (WWDVFMDYLAVVMLMVAIFAGTMQLT). Topologically, residues 49–164 (KDQVVCLPVL…YHLALPWYSK (116 aa)) are extracellular. An intrachain disulfide couples Cys54 to Cys355. Positions 110 to 138 (IPLQATHPHAESTLPNQEAKKEKRDPTGR) are disordered. Over residues 127–138 (EAKKEKRDPTGR) the composition is skewed to basic and acidic residues. The chain crosses the membrane as a helical span at residues 165 to 183 (YFPYLALIHTIILMVSSNF). At 184 to 309 (WFKYPKTCSK…EDSDLIYKLY (126 aa)) the chain is on the cytoplasmic side. Positions 222–252 (SEENKQRITGAQTLPKHVSTSSDEGSPSAST) are disordered. The segment covering 228-252 (RITGAQTLPKHVSTSSDEGSPSAST) has biased composition (polar residues). Phosphoserine is present on residues Ser242, Ser243, and Ser247. A helical membrane pass occupies residues 310-331 (VVQTLIKTAKFIFILCYTANFV). Topologically, residues 332–361 (NAISFEHVCKPKVEHLTGYEVFECTHNMAY) are extracellular. Residues 362–387 (MLKKLLISYISIICVYGFICLYTLFW) traverse the membrane as a helical segment. The Cytoplasmic portion of the chain corresponds to 388-859 (LFRIPLKEYS…DVNVPFANGI (472 aa)). 13 LRR repeats span residues 515–535 (NLQELHLCHCPAKVEQTAFSF), 539–560 (HLRCLHVKFTDVAEIPAWVYLL), 562–583 (NLRELYLIGNLNSENNKMIGLE), 590–610 (HLKILHVKSNLTKVPSNITDV), 613–633 (HLTKLVIHNDGTKLLVLNSLK), 637–658 (NVAELELQNCELERIPHAIFSL), 660–681 (NLQELDLKSNNIRTIEEIISFQ), 685–706 (RLTCLKLWHNKIVAIPPSITHV), 708–729 (NLESLYFSNNKLESLPTAVFSL), 731–752 (KLRCLDVSYNNISTIPIEIGLL), 754–775 (NLQHLHITGNKVDILPKQLFKC), 777–798 (KLRTLNLGQNCIASLPEKISQL), and 800–821 (QLTQLELKGNCLDRLPAQLGQC).

It belongs to the LRRC8 family. Heterohexamer; oligomerizes with other LRRC8 proteins (LRRC8A, LRRC8B, LRRC8C and/or LRRC8E) to form a heterohexamer. In vivo, the subunit composition may depend primarily on expression levels, and heterooligomeric channels containing various proportions of the different LRRC8 proteins may coexist. In terms of tissue distribution, expressed in pancreatic beta cells. Also expressed in glucagon-secreting pancreatic alpha cells.

Its subcellular location is the cell membrane. The protein resides in the endoplasmic reticulum membrane. The catalysed reaction is chloride(in) = chloride(out). The enzyme catalyses iodide(out) = iodide(in). It carries out the reaction taurine(out) = taurine(in). In terms of biological role, non-essential component of the volume-regulated anion channel (VRAC, also named VSOAC channel), an anion channel required to maintain a constant cell volume in response to extracellular or intracellular osmotic changes. The VRAC channel conducts iodide better than chloride and can also conduct organic osmolytes like taurine. Plays a redundant role in the efflux of amino acids, such as aspartate, in response to osmotic stress family member (LRRC8B, LRRC8C, LRRC8D or LRRC8E); channel characteristics depend on the precise subunit composition. Also acts as a regulator of glucose-sensing in pancreatic beta cells: VRAC currents, generated in response to hypotonicity- or glucose-induced beta cell swelling, depolarize cells, thereby causing electrical excitation, leading to increase glucose sensitivity and insulin secretion. VRAC channels containing LRRC8D inhibit transport of immunoreactive cyclic dinucleotide GMP-AMP (2'-3'-cGAMP), an immune messenger produced in response to DNA virus in the cytosol. In Mus musculus (Mouse), this protein is Volume-regulated anion channel subunit LRRC8D.